Reading from the N-terminus, the 259-residue chain is Deoxyribose-phosphate aldolase (259 aa).

Catalysis depends on Asp-102, which acts as the Proton donor/acceptor. Lys-167 (schiff-base intermediate with acetaldehyde) is an active-site residue. Catalysis depends on Lys-201, which acts as the Proton donor/acceptor.

It belongs to the DeoC/FbaB aldolase family. DeoC type 2 subfamily.

The protein resides in the cytoplasm. It carries out the reaction 2-deoxy-D-ribose 5-phosphate = D-glyceraldehyde 3-phosphate + acetaldehyde. Its pathway is carbohydrate degradation; 2-deoxy-D-ribose 1-phosphate degradation; D-glyceraldehyde 3-phosphate and acetaldehyde from 2-deoxy-alpha-D-ribose 1-phosphate: step 2/2. In terms of biological role, catalyzes a reversible aldol reaction between acetaldehyde and D-glyceraldehyde 3-phosphate to generate 2-deoxy-D-ribose 5-phosphate. This chain is Deoxyribose-phosphate aldolase, found in Salmonella typhi.